Here is a 142-residue protein sequence, read N- to C-terminus: Glia maturation factor gamma (142 aa).

S2 carries the N-acetylserine modification. In terms of domain architecture, ADF-H spans 4-139 (SLVVCDVDPE…NETWLKEKLA (136 aa)).

It belongs to the actin-binding proteins ADF family. GMF subfamily. In terms of tissue distribution, expressed in rat thymus, testis, and spleen. Is present predominantly in proliferative and differentiative organs.

This is Glia maturation factor gamma (Gmfg) from Rattus norvegicus (Rat).